Consider the following 589-residue polypeptide: Mediator of RNA polymerase II transcription subunit 26 (589 aa).

The region spanning 10–87 is the TFIIS N-terminal domain; sequence QMRDRLLQAI…RNWQKLIEPG (78 aa). Disordered regions lie at residues 83 to 233, 247 to 320, and 363 to 441; these read LIEP…TKLP, ARVD…DGPS, and LETK…PIPE. The span at 190-213 shows a compositional bias: basic and acidic residues; the sequence is LLEKDDEVPSDRIRLEHLDNDRHN. Over residues 259–268 the composition is skewed to low complexity; the sequence is SPRYSSSPRS. Residues 276 to 297 show a composition bias toward polar residues; that stretch reads KRSTTYAPKGTLSSPSLNSAQV. 2 stretches are compositionally biased toward basic and acidic residues: residues 398-412 and 424-435; these read SEDRTKPRLKERRLT and TPKESHQEEECH.

The protein belongs to the Mediator complex subunit 26 family. In terms of assembly, component of the Mediator complex.

It is found in the nucleus. Component of the Mediator complex, a coactivator involved in the regulated transcription of nearly all RNA polymerase II-dependent genes. Mediator functions as a bridge to convey information from gene-specific regulatory proteins to the basal RNA polymerase II transcription machinery. Mediator is recruited to promoters by direct interactions with regulatory proteins and serves as a scaffold for the assembly of a functional preinitiation complex with RNA polymerase II and the general transcription factors. In Danio rerio (Zebrafish), this protein is Mediator of RNA polymerase II transcription subunit 26 (med26).